The following is a 463-amino-acid chain: Ammonium transporter 1 (463 aa).

The Extracellular segment spans residues 1–39 (MVAGEIIKGVAAEITNGSSSSVVQKYLDCANQVAPDPGN). A helical transmembrane segment spans residues 40–60 (TTWVLLSTILVLGMMPALAFF). Topologically, residues 61–76 (EAGLLRSKNTLSIITQ) are cytoplasmic. The helical transmembrane segment at 77 to 97 (IMSGIVVLTVMWQAFGYSLTF) threads the bilayer. At 98-127 (GPDQKGIIGNLDHAFLINVSYDDCSPNAPN) the chain is on the extracellular side. A helical membrane pass occupies residues 128-148 (IPAAAYAFFMMMFANITPLLM). At 149–160 (TGAFAERVKFKA) the chain is on the cytoplasmic side. Residues 161 to 181 (FIALTVAWEIIVFYPVAHWIW) form a helical membrane-spanning segment. Over 182–194 (GGGWLHKYFGVLD) the chain is Extracellular. A helical membrane pass occupies residues 195–215 (FAGGIVIHTSAGVSALVIALY). The Cytoplasmic segment spans residues 216–233 (VGRRKDFEKYGGEFPPSN). The helical transmembrane segment at 234–254 (LPLATIGAALLWMGWFGFNAG) threads the bilayer. Topologically, residues 255 to 265 (SALAAGNIATS) are extracellular. The helical transmembrane segment at 266-286 (AVASTQIGGSFSAIVWIILSA) threads the bilayer. Residues 287–293 (AKGKPNT) are Cytoplasmic-facing. A helical membrane pass occupies residues 294 to 314 (VSVINGVIAGLAGITPASGYI). Residues 315–316 (NS) lie on the Extracellular side of the membrane. The chain crosses the membrane as a helical span at residues 317 to 337 (QYSIGLGICLGLASYYSVVLL). At 338–351 (KHKLHIDDALDVSS) the chain is on the cytoplasmic side. A helical membrane pass occupies residues 352-372 (VHGLTGIIGSLAIGFCAELSV). The Extracellular portion of the chain corresponds to 373-392 (NPNGANGAFYGNPKLIGTQL). Residues 393 to 413 (LGVVSVAVWAAAWTWVLLKII) traverse the membrane as a helical segment. The Cytoplasmic segment spans residues 414 to 463 (DATIGVKIDESEEELGLDLVEHGEFAYHNISLQGNENHYSSVINSHDFFK).

The protein belongs to the ammonia transporter channel (TC 1.A.11.2) family.

The protein resides in the cell membrane. Its subcellular location is the endosome membrane. It localises to the lysosome membrane. The protein localises to the cytoplasmic vesicle. It is found in the phagosome membrane. Functionally, ammonium transporter that mediates the excretion of ammonium. Controls ammonium homeostasis during growth and development. Ammonium has been shown to function as a morphogen at multiple steps during the development. The polypeptide is Ammonium transporter 1 (amtA) (Dictyostelium discoideum (Social amoeba)).